A 1220-amino-acid polypeptide reads, in one-letter code: ATP-dependent helicase/nuclease subunit A (1220 aa).

In terms of domain architecture, UvrD-like helicase ATP-binding spans 9–473 (VIWTDDQWKS…IDLSQNFRSR (465 aa)). Position 30–37 (30–37 (AAAGSGKT)) interacts with ATP. One can recognise a UvrD-like helicase C-terminal domain in the interval 474 to 782 (PEVLSTTNYL…RMMTIHASKG (309 aa)).

Belongs to the helicase family. AddA subfamily. As to quaternary structure, heterodimer of AddA and AddB/RexB. Mg(2+) is required as a cofactor.

The enzyme catalyses Couples ATP hydrolysis with the unwinding of duplex DNA by translocating in the 3'-5' direction.. The catalysed reaction is ATP + H2O = ADP + phosphate + H(+). The heterodimer acts as both an ATP-dependent DNA helicase and an ATP-dependent, dual-direction single-stranded exonuclease. Recognizes the chi site generating a DNA molecule suitable for the initiation of homologous recombination. The AddA nuclease domain is required for chi fragment generation; this subunit has the helicase and 3' -&gt; 5' nuclease activities. This Staphylococcus carnosus (strain TM300) protein is ATP-dependent helicase/nuclease subunit A.